The chain runs to 350 residues: Protein XRP2 (350 aa).

Residues 1–10 (MGCFFSKRRK) show a composition bias toward basic residues. The segment at 1 to 31 (MGCFFSKRRKADKESRPENEEERPKQYSWDQ) is disordered. Gly-2 carries N-myristoyl glycine lipidation. Cys-3 carries the S-palmitoyl cysteine lipid modification. Basic and acidic residues predominate over residues 11–31 (ADKESRPENEEERPKQYSWDQ). Positions 24–179 (PKQYSWDQRE…TWSNIHDFTP (156 aa)) constitute a C-CAP/cofactor C-like domain. Residues 98–99 (GS) and 115–118 (QQFR) contribute to the GTP site.

The protein belongs to the TBCC family. As to quaternary structure, found in a complex with ARL3, RP2 and UNC119 (or UNC119B); RP2 induces hydrolysis of GTP ARL3 in the complex, leading to the release of UNC119 (or UNC119B). Interacts with ARL3; interaction is direct and stimulated with the activated GTP-bound form of ARL3. Myristoylated on Gly-2; which may be required for membrane targeting. Post-translationally, palmitoylated on Cys-3; which may be required for plasma membrane targeting. Mutation of Cys-3 targets the protein to internal membranes. Ubiquitous. Expressed in the rod and cone photoreceptors, extending from the tips of the outer segment (OS) through the inner segment (IS) and outer nuclear layer (ONL) and into the synaptic terminals of the outer plexiform layer (ONL). Also detected in the bipolar, horizontal and amacrine cells in the inner nuclear layer (INL), extending to the inner plexiform layer (IPL) and though the ganglion cell layer (GCL) and into the nerve fiber layer (NFL) (at protein level).

It is found in the cell membrane. It localises to the cell projection. The protein localises to the cilium. Functionally, acts as a GTPase-activating protein (GAP) involved in trafficking between the Golgi and the ciliary membrane. Involved in localization of proteins, such as NPHP3, to the cilium membrane by inducing hydrolysis of GTP ARL3, leading to the release of UNC119 (or UNC119B). Acts as a GTPase-activating protein (GAP) for tubulin in concert with tubulin-specific chaperone C, but does not enhance tubulin heterodimerization. Acts as a guanine nucleotide dissociation inhibitor towards ADP-ribosylation factor-like proteins. This chain is Protein XRP2 (RP2), found in Homo sapiens (Human).